Reading from the N-terminus, the 202-residue chain is uncharacterized protein (202 aa).

A GST N-terminal domain is found at 1–78; that stretch reads MKLVGSYTSP…YIELMNVAPA (78 aa). Glutathione-binding positions include S9, V49, and 62 to 63; that span reads DS. The region spanning 83-202 is the GST C-terminal domain; it reads DPLESLRVRK…SFARTEPPKA (120 aa).

Belongs to the GST superfamily. HSP26 family.

In terms of biological role, glutathione (GSH) transferase homolog, that might be involved in selenium metabolism. This is an uncharacterized protein from Escherichia coli (strain K12).